The sequence spans 255 residues: MKRALLITVALIAVLALTTLVAWRYLFPHDPDALRHIVMQQCLPGERERQEPAPCAQVNLPAGYVVLKDINGPLQYLLMPTWKINGVESPLLLSDNTPNFFWQAWQARRWMSEKRGSPVPDSAVSLTINSRMGRSQNHFHIHISCLRPDVRAQLDAAMNAIGSRWQPFPGSLRGHDYLARRVSGEELSRRSPFMMLAEEVPQAREHMGRYSLALAPLKDGAFVLLATQRQLLQFNLAHSEELQDHDCALLHEGTP.

Residues L5–F27 form a helical membrane-spanning segment.

It belongs to the Cdh family.

It is found in the cell inner membrane. The catalysed reaction is a CDP-1,2-diacyl-sn-glycerol + H2O = a 1,2-diacyl-sn-glycero-3-phosphate + CMP + 2 H(+). Its pathway is phospholipid metabolism; CDP-diacylglycerol degradation; phosphatidate from CDP-diacylglycerol: step 1/1. The sequence is that of CDP-diacylglycerol pyrophosphatase from Cronobacter sakazakii (strain ATCC BAA-894) (Enterobacter sakazakii).